We begin with the raw amino-acid sequence, 117 residues long: Pancreatic progenitor cell differentiation and proliferation factor A (117 aa).

Residues 22-46 form a disordered region; the sequence is GSTSSNSSCSSSEYTGEVIPHPPGL. A compositionally biased stretch (low complexity) spans 23-33; that stretch reads STSSNSSCSSS.

The protein belongs to the PPDPF family. As to expression, expressed exclusively in the exocrine cells during pancreas development.

Functionally, probable regulator of exocrine pancreas development. The sequence is that of Pancreatic progenitor cell differentiation and proliferation factor A (ppdpfa) from Danio rerio (Zebrafish).